The chain runs to 104 residues: L-rhamnose mutarotase (104 aa).

Tyr-18 contributes to the substrate binding site. His-22 serves as the catalytic Proton donor. Residues Tyr-41 and 76-77 contribute to the substrate site; that span reads WW.

It belongs to the rhamnose mutarotase family. Homodimer.

The protein localises to the cytoplasm. The enzyme catalyses alpha-L-rhamnose = beta-L-rhamnose. The protein operates within carbohydrate metabolism; L-rhamnose metabolism. Involved in the anomeric conversion of L-rhamnose. In Mannheimia succiniciproducens (strain KCTC 0769BP / MBEL55E), this protein is L-rhamnose mutarotase.